We begin with the raw amino-acid sequence, 158 residues long: SsrA-binding protein (158 aa).

A disordered region spans residues 131–158 (YDKRQTLRERQDKREADRAMSSHRRLGE).

The protein belongs to the SmpB family.

The protein localises to the cytoplasm. Required for rescue of stalled ribosomes mediated by trans-translation. Binds to transfer-messenger RNA (tmRNA), required for stable association of tmRNA with ribosomes. tmRNA and SmpB together mimic tRNA shape, replacing the anticodon stem-loop with SmpB. tmRNA is encoded by the ssrA gene; the 2 termini fold to resemble tRNA(Ala) and it encodes a 'tag peptide', a short internal open reading frame. During trans-translation Ala-aminoacylated tmRNA acts like a tRNA, entering the A-site of stalled ribosomes, displacing the stalled mRNA. The ribosome then switches to translate the ORF on the tmRNA; the nascent peptide is terminated with the 'tag peptide' encoded by the tmRNA and targeted for degradation. The ribosome is freed to recommence translation, which seems to be the essential function of trans-translation. This Clavibacter michiganensis subsp. michiganensis (strain NCPPB 382) protein is SsrA-binding protein.